The following is a 315-amino-acid chain: Probable cell division protein WhiA (315 aa).

The segment at residues 280-313 (SLRELGKMLNPPVGKSGVNHRLRRIEKIADELKQ) is a DNA-binding region (H-T-H motif).

The protein belongs to the WhiA family.

Functionally, involved in cell division and chromosome segregation. In Clostridium botulinum (strain ATCC 19397 / Type A), this protein is Probable cell division protein WhiA.